The sequence spans 77 residues: Acyl carrier protein (77 aa).

Residues 1-76 form the Carrier domain; it reads MENFDKVKDI…DAVKFINSLE (76 aa). S36 is subject to O-(pantetheine 4'-phosphoryl)serine.

Belongs to the acyl carrier protein (ACP) family. In terms of processing, 4'-phosphopantetheine is transferred from CoA to a specific serine of apo-ACP by AcpS. This modification is essential for activity because fatty acids are bound in thioester linkage to the sulfhydryl of the prosthetic group.

It localises to the cytoplasm. It participates in lipid metabolism; fatty acid biosynthesis. Functionally, carrier of the growing fatty acid chain in fatty acid biosynthesis. This Staphylococcus aureus (strain Mu3 / ATCC 700698) protein is Acyl carrier protein.